The following is a 556-amino-acid chain: MKETLQAMIRAAATAAFEKGALTASRFPDIELEAPRFRDHGDFATNLAMVSASTQKMAPRKIAEAIVAHLADSAGILLKTEIAGPGFINFFICPEAWLPVLHRIHEDQERFGACDLGGGKRVQVEFVSANPTGPLHVGHGRGAAVGDSVARILAFCGWQVHREYYVNDAGNQILTLGRSVLLRWRELSGQAVDFPEDCYQGDYIRSIARQIDAEHRQALEKMESAEAVAFCARVAADQILDGIRRDLADFSITFDQWFSEKSLVETGAVETTLARLKETGVVYESEGALWFATSRFGDEKDRVVVRNNGEATYFASDIAYHKNKFDRGFNRVIDVWGADHHGYIPRVKAAIGAVGRSQDDLDVILVQLVALLREGQPVSMSTRSGEFVTLKEVTNEVGADAARFIFLSRHYDSPLDFDLELAKKKSNDNPVYYVQYVHARIASMLKKAAEEKGIGRVTAVDDKTLRRLAEPEEIDLVKLLARYPEAVSHAARFLEPHRITFYLLDLAAGFHGYYSRHKVLTEDDGLTMARLYLVCAVKQVIKNGLALLGVSAPESM.

The 'HIGH' region signature appears at 129–139 (ANPTGPLHVGH).

It belongs to the class-I aminoacyl-tRNA synthetase family. Monomer.

Its subcellular location is the cytoplasm. The enzyme catalyses tRNA(Arg) + L-arginine + ATP = L-arginyl-tRNA(Arg) + AMP + diphosphate. This chain is Arginine--tRNA ligase, found in Desulfosudis oleivorans (strain DSM 6200 / JCM 39069 / Hxd3) (Desulfococcus oleovorans).